The sequence spans 25 residues: Small ribosomal subunit protein eS32A (25 aa).

The disordered stretch occupies residues 1–25; sequence MRDKWRKKRVRRLKRKRRKMRARSK.

It belongs to the eukaryotic ribosomal protein eS32 family. In terms of assembly, component of the large ribosomal subunit (LSU). Mature yeast ribosomes consist of a small (40S) and a large (60S) subunit. The 40S small subunit contains 1 molecule of ribosomal RNA (18S rRNA) and at least 33 different proteins. The large 60S subunit contains 3 rRNA molecules (25S, 5.8S and 5S rRNA) and at least 46 different proteins.

The protein localises to the cytoplasm. It localises to the nucleus. In terms of biological role, component of the ribosome, a large ribonucleoprotein complex responsible for the synthesis of proteins in the cell. The small ribosomal subunit (SSU) binds messenger RNAs (mRNAs) and translates the encoded message by selecting cognate aminoacyl-transfer RNA (tRNA) molecules. The large subunit (LSU) contains the ribosomal catalytic site termed the peptidyl transferase center (PTC), which catalyzes the formation of peptide bonds, thereby polymerizing the amino acids delivered by tRNAs into a polypeptide chain. The nascent polypeptides leave the ribosome through a tunnel in the LSU and interact with protein factors that function in enzymatic processing, targeting, and the membrane insertion of nascent chains at the exit of the ribosomal tunnel. The chain is Small ribosomal subunit protein eS32A (rpl4101) from Schizosaccharomyces pombe (strain 972 / ATCC 24843) (Fission yeast).